The sequence spans 82 residues: Small ribosomal subunit protein bS20 (82 aa).

The span at M1–I11 shows a compositional bias: basic residues. The disordered stretch occupies residues M1–R20.

Belongs to the bacterial ribosomal protein bS20 family.

Functionally, binds directly to 16S ribosomal RNA. The chain is Small ribosomal subunit protein bS20 from Christiangramia forsetii (strain DSM 17595 / CGMCC 1.15422 / KT0803) (Gramella forsetii).